We begin with the raw amino-acid sequence, 145 residues long: Peptide methionine sulfoxide reductase MsrB (145 aa).

The MsrB domain maps to Lys6 to Val129. Cys118 functions as the Nucleophile in the catalytic mechanism.

The protein belongs to the MsrB Met sulfoxide reductase family.

It carries out the reaction L-methionyl-[protein] + [thioredoxin]-disulfide + H2O = L-methionyl-(R)-S-oxide-[protein] + [thioredoxin]-dithiol. This Listeria monocytogenes serovar 1/2a (strain ATCC BAA-679 / EGD-e) protein is Peptide methionine sulfoxide reductase MsrB.